The primary structure comprises 274 residues: MIARILSINANDLFCEVNHELKKLHAPGRWKHQKINLAPNDLLELNDQGEIIKLIERKNYLNRPKVANLDHVVLVFSIKDPQLNLKQLFKFMVYFESQLGFKPLIVFSKLDLDHDQNEFKKIVEALEQINYQVFKLNEPDDFLRLKNLLFNKVTIFCGHSGVGKSTLLKRLDNSLDIWTQAVSAKLKRGKNTTTATKLYKFLDGYLVDSPGFSIYDLNLTKQQLSCGLIEFAQYQTKCKFNDCLHLENSADCYLKKKINSLIYQIYLSVIKSII.

A CP-type G domain is found at 58 to 215 (KNYLNRPKVA…LVDSPGFSIY (158 aa)). GTP is bound by residues 108–111 (SKLD) and 158–166 (GHSGVGKST). Residues Cys238, Cys243, His245, and Cys252 each coordinate Zn(2+).

This sequence belongs to the TRAFAC class YlqF/YawG GTPase family. RsgA subfamily. Monomer. Associates with 30S ribosomal subunit, binds 16S rRNA. Zn(2+) is required as a cofactor.

It localises to the cytoplasm. In terms of biological role, one of several proteins that assist in the late maturation steps of the functional core of the 30S ribosomal subunit. Helps release RbfA from mature subunits. May play a role in the assembly of ribosomal proteins into the subunit. Circularly permuted GTPase that catalyzes slow GTP hydrolysis, GTPase activity is stimulated by the 30S ribosomal subunit. The polypeptide is Small ribosomal subunit biogenesis GTPase RsgA (Mycoplasmoides gallisepticum (strain R(low / passage 15 / clone 2)) (Mycoplasma gallisepticum)).